Here is a 338-residue protein sequence, read N- to C-terminus: NADPH dehydrogenase (338 aa).

22 to 25 (SPMC) provides a ligand contact to FMN. Tyrosine 27 contributes to the substrate binding site. The FMN site is built by alanine 59 and glutamine 101. 163 to 166 (HAAH) is a substrate binding site. FMN is bound by residues arginine 214 and 306–307 (GR).

Belongs to the NADH:flavin oxidoreductase/NADH oxidase family. NamA subfamily. In terms of assembly, homotetramer. It depends on FMN as a cofactor.

The catalysed reaction is A + NADPH + H(+) = AH2 + NADP(+). Functionally, catalyzes the reduction of the double bond of an array of alpha,beta-unsaturated aldehydes and ketones. It also reduces the nitro group of nitroester and nitroaromatic compounds. It could have a role in detoxification processes. The protein is NADPH dehydrogenase of Listeria monocytogenes serotype 4b (strain CLIP80459).